Here is a 357-residue protein sequence, read N- to C-terminus: Glutamine synthetase (357 aa).

The GS beta-grasp domain maps to 25-104; sequence VMAEYIWIDA…VLCETWDSDG (80 aa). The region spanning 111–357 is the GS catalytic domain; that stretch reads YRHDCARLME…IIAETLCGGL (247 aa).

The protein belongs to the glutamine synthetase family. In terms of assembly, homooctamer.

It is found in the cytoplasm. The enzyme catalyses L-glutamate + NH4(+) + ATP = L-glutamine + ADP + phosphate + H(+). The sequence is that of Glutamine synthetase (glnA) from Emericella nidulans (strain FGSC A4 / ATCC 38163 / CBS 112.46 / NRRL 194 / M139) (Aspergillus nidulans).